The following is a 156-amino-acid chain: Small ribosomal subunit protein uS7 (156 aa).

It belongs to the universal ribosomal protein uS7 family. As to quaternary structure, part of the 30S ribosomal subunit. Contacts proteins S9 and S11.

Functionally, one of the primary rRNA binding proteins, it binds directly to 16S rRNA where it nucleates assembly of the head domain of the 30S subunit. Is located at the subunit interface close to the decoding center, probably blocks exit of the E-site tRNA. The protein is Small ribosomal subunit protein uS7 of Synechococcus sp. (strain RCC307).